The chain runs to 110 residues: Host transcription reprogramming factor 2 (110 aa).

The signal sequence occupies residues 1–18 (MHLKASSILALLVIGANA). The C2H2-type zinc-finger motif lies at 68-96 (IMCGYCGKRFWNKPDLEKHIKLKPSKGGH). Residues 88-110 (KLKPSKGGHKGQPYKEHSWNRPT) are disordered. Basic and acidic residues predominate over residues 100 to 110 (PYKEHSWNRPT).

Its subcellular location is the secreted. It localises to the host nucleus. Functionally, secreted effector that translocates into the nuclei of host cells to reprogram the expression of immunity-associated genes by binding to effector binding elements (EBEs) in rice. Binds the 5'-CCACCTCC-3' EBE of promoters from targeted rice genes and probably recruits a yet to be determined host repressor. Causes ambivalent immunity with increased susceptibility to the hemibiotrophic pathogens Magnaporthe oryzae and Xanthomonas oryzae pv. oryzae, but enhances resistance to Cochliobolus miyabeanus, a necrotrophic pathogen. This chain is Host transcription reprogramming factor 2, found in Pyricularia oryzae (strain 70-15 / ATCC MYA-4617 / FGSC 8958) (Rice blast fungus).